Reading from the N-terminus, the 239-residue chain is Carboxy-S-adenosyl-L-methionine synthase (239 aa).

Residues Tyr35, 64–66 (GSS), 114–115 (DL), Asn129, and Arg196 contribute to the S-adenosyl-L-methionine site.

It belongs to the class I-like SAM-binding methyltransferase superfamily. Cx-SAM synthase family. Homodimer.

It carries out the reaction prephenate + S-adenosyl-L-methionine = carboxy-S-adenosyl-L-methionine + 3-phenylpyruvate + H2O. In terms of biological role, catalyzes the conversion of S-adenosyl-L-methionine (SAM) to carboxy-S-adenosyl-L-methionine (Cx-SAM). In Helicobacter hepaticus (strain ATCC 51449 / 3B1), this protein is Carboxy-S-adenosyl-L-methionine synthase.